Consider the following 746-residue polypeptide: Ferric enterobactin receptor (746 aa).

Positions 1-25 (MSSRALPAVPFLLLSSCLLANAVHA) are cleaved as a signal peptide. The TonB box signature appears at 39–44 (QTVVAT). One can recognise a TBDR plug domain in the interval 47–174 (EETKQAPGVS…AGGVVNIITK (128 aa)). 3 disordered regions span residues 82–102 (VNLT…IDIR), 235–254 (GHES…GREG), and 397–424 (QKLD…KNRS). Residues 84-98 (LTGNSSSGQRGNNRQ) show a composition bias toward polar residues. The TBDR beta-barrel domain maps to 179-746 (ETHGNLSVYS…TFYTSLTASF (568 aa)). Residues 402-411 (PSSNTQNTEE) are compositionally biased toward polar residues. Residues 729 to 746 (ATYNEPGRTFYTSLTASF) carry the TonB C-terminal box motif.

Belongs to the TonB-dependent receptor family.

It localises to the cell outer membrane. In terms of biological role, specific receptor for the siderophore ferric enterobactin. This is Ferric enterobactin receptor (pfeA) from Pseudomonas aeruginosa (strain ATCC 15692 / DSM 22644 / CIP 104116 / JCM 14847 / LMG 12228 / 1C / PRS 101 / PAO1).